We begin with the raw amino-acid sequence, 374 residues long: MAAMMQKSAFTGSAVSSKSGVRAKAARAVVDVRAEKKIRVAINGFGRIGRNFLRCWHGRQNTLLDVVAINDSGGVKQASHLLKYDSTLGTFAADVKIVDDSHISVDGKQIKIVSSRDPLQLPWKEMNIDLVIEGTGVFIDKVGAGKHIQAGASKVLITAPAKDKDIPTFVVGVNEGDYKHEYPIISNASCTTNCLAPFVKVLEQKFGIVKGTMTTTHSYTGDQRLLDASHRDLRRARAAALNIVPTTTGAAKAVSLVLPSLKGKLNGIALRVPTPTVSVVDLVVQVEKKTFAEEVNAAFREAANGPMKGVLHVEDAPLVSIDFKCTDQSTSIDASLTMVMGDDMVKVVAWYDNEWGYSQRVVDLAEVTAKKWVA.

The transit peptide at 1–34 (MAAMMQKSAFTGSAVSSKSGVRAKAARAVVDVRA) directs the protein to the chloroplast. Residues 47-48 (RI), D71, and R116 each bind NADP(+). C55 and C325 form a disulfide bridge. D-glyceraldehyde 3-phosphate contacts are provided by residues 189 to 191 (SCT), T220, R235, 248 to 249 (TG), and R271. The active-site Nucleophile is the C190. Residue N353 coordinates NADP(+).

The protein belongs to the glyceraldehyde-3-phosphate dehydrogenase family. In terms of assembly, homotetramer. Component of a complex that contains two dimers of PRK, two tetramers of GAPDH and CP12. CP12 associates with GAPDH, causing its conformation to change. This GAPDH/CP12 complex binds PRK to form a half-complex (one unit). This unit probably dimerizes due partially to interactions between the enzymes of each unit.

The protein resides in the plastid. Its subcellular location is the chloroplast. It catalyses the reaction D-glyceraldehyde 3-phosphate + phosphate + NADP(+) = (2R)-3-phospho-glyceroyl phosphate + NADPH + H(+). Its pathway is carbohydrate biosynthesis; Calvin cycle. This Chlamydomonas reinhardtii (Chlamydomonas smithii) protein is Glyceraldehyde-3-phosphate dehydrogenase A, chloroplastic (GAPA).